A 288-amino-acid chain; its full sequence is MVNLPKFTMRDLVESGVHFGHKASRWNPKMAPYIYGVHNDIHIINLQNTVVLLKNALKALYDIVLKRGRVLFIGTKVQASAIIADEAVRCGQYYINNRWLGGMLTNWETISLSIKKLKEYEKLIENVDNQFTKKELLLFEKKRAKLDRSIGGICNMGGLPHALFVIDTNKEHIAIKEANKLNIPVIAVLDTNSDPAGIDYPIPGNDDAVRSIDFFCKIVSDTILEAIRSDLAKSGINVDGIKDFSVEKREDLLRANNRDHKNNKNNSTIDNAENLKEENLVGGSNNES.

Positions 255 to 288 (ANNRDHKNNKNNSTIDNAENLKEENLVGGSNNES) are disordered.

The protein belongs to the universal ribosomal protein uS2 family.

The chain is Small ribosomal subunit protein uS2 from Ehrlichia chaffeensis (strain ATCC CRL-10679 / Arkansas).